Here is a 521-residue protein sequence, read N- to C-terminus: Medium/long-chain-fatty-acid--[acyl-carrier-protein] ligase MbtM (521 aa).

Belongs to the ATP-dependent AMP-binding enzyme family.

The catalysed reaction is a long-chain fatty acid + holo-[ACP] + ATP = a long-chain fatty acyl-[ACP] + AMP + diphosphate. It catalyses the reaction a medium-chain fatty acid + holo-[ACP] + ATP = a medium-chain fatty acyl-[ACP] + AMP + diphosphate. It participates in siderophore biosynthesis; mycobactin biosynthesis. Functionally, activates lipidic moieties required for mycobactin biosynthesis. Converts medium- to long-chain aliphatic fatty acids into acyl adenylate, which is further transferred on to the phosphopantetheine arm of the carrier protein MbtL. In Mycobacterium bovis (strain ATCC BAA-935 / AF2122/97), this protein is Medium/long-chain-fatty-acid--[acyl-carrier-protein] ligase MbtM (mbtM).